Reading from the N-terminus, the 160-residue chain is Protein shisa-like-2B (160 aa).

The helical transmembrane segment at isoleucine 65 to valine 85 threads the bilayer.

It belongs to the shisa family.

The protein resides in the membrane. The polypeptide is Protein shisa-like-2B (Homo sapiens (Human)).